Reading from the N-terminus, the 240-residue chain is Ribonuclease HII (240 aa).

In terms of domain architecture, RNase H type-2 spans 7 to 215 (RYAIGIDEAG…LKRIAPGWYV (209 aa)). Positions 13, 14, and 112 each coordinate a divalent metal cation.

Belongs to the RNase HII family. Mn(2+) is required as a cofactor. It depends on Mg(2+) as a cofactor.

Its subcellular location is the cytoplasm. The catalysed reaction is Endonucleolytic cleavage to 5'-phosphomonoester.. Its function is as follows. Endonuclease that specifically degrades the RNA of RNA-DNA hybrids. This Hyperthermus butylicus (strain DSM 5456 / JCM 9403 / PLM1-5) protein is Ribonuclease HII.